Here is a 286-residue protein sequence, read N- to C-terminus: uncharacterized protein (286 aa).

This is an uncharacterized protein from Acidianus sp. F28 (AFV-2).